Reading from the N-terminus, the 358-residue chain is Uroporphyrinogen decarboxylase (358 aa).

Substrate-binding positions include 29 to 33 (RQAGR), Phe-48, Asp-79, Tyr-155, Ser-210, and His-330.

The protein belongs to the uroporphyrinogen decarboxylase family. In terms of assembly, homodimer.

It localises to the cytoplasm. The enzyme catalyses uroporphyrinogen III + 4 H(+) = coproporphyrinogen III + 4 CO2. It functions in the pathway porphyrin-containing compound metabolism; protoporphyrin-IX biosynthesis; coproporphyrinogen-III from 5-aminolevulinate: step 4/4. Its function is as follows. Catalyzes the decarboxylation of four acetate groups of uroporphyrinogen-III to yield coproporphyrinogen-III. This chain is Uroporphyrinogen decarboxylase, found in Bordetella pertussis (strain Tohama I / ATCC BAA-589 / NCTC 13251).